The primary structure comprises 103 residues: Integration host factor subunit alpha (103 aa).

The disordered stretch occupies residues 55-74; the sequence is CREKPQRPGRNPKTGEEMPI.

This sequence belongs to the bacterial histone-like protein family. As to quaternary structure, heterodimer of an alpha and a beta chain.

In terms of biological role, this protein is one of the two subunits of integration host factor, a specific DNA-binding protein that functions in genetic recombination as well as in transcriptional and translational control. The sequence is that of Integration host factor subunit alpha from Thiobacillus denitrificans (strain ATCC 25259 / T1).